Consider the following 138-residue polypeptide: Cysteine desulfuration protein SufE (138 aa).

Cys51 functions as the Cysteine persulfide intermediate in the catalytic mechanism.

The protein belongs to the SufE family. As to quaternary structure, homodimer. Interacts with SufS.

Its subcellular location is the cytoplasm. Its pathway is cofactor biosynthesis; iron-sulfur cluster biosynthesis. In terms of biological role, participates in cysteine desulfuration mediated by SufS. Cysteine desulfuration mobilizes sulfur from L-cysteine to yield L-alanine and constitutes an essential step in sulfur metabolism for biosynthesis of a variety of sulfur-containing biomolecules. Functions as a sulfur acceptor for SufS, by mediating the direct transfer of the sulfur atom from the S-sulfanylcysteine of SufS, an intermediate product of cysteine desulfuration process. The sequence is that of Cysteine desulfuration protein SufE from Klebsiella pneumoniae subsp. pneumoniae (strain ATCC 700721 / MGH 78578).